We begin with the raw amino-acid sequence, 383 residues long: Glucose-1-phosphate adenylyltransferase (383 aa).

Alpha-D-glucose 1-phosphate contacts are provided by residues Y99, G164, E179 to K180, and S190.

It belongs to the bacterial/plant glucose-1-phosphate adenylyltransferase family. Homotetramer.

It catalyses the reaction alpha-D-glucose 1-phosphate + ATP + H(+) = ADP-alpha-D-glucose + diphosphate. It participates in glycan biosynthesis; glycogen biosynthesis. Functionally, involved in the biosynthesis of ADP-glucose, a building block required for the elongation reactions to produce glycogen. Catalyzes the reaction between ATP and alpha-D-glucose 1-phosphate (G1P) to produce pyrophosphate and ADP-Glc. In Halalkalibacterium halodurans (strain ATCC BAA-125 / DSM 18197 / FERM 7344 / JCM 9153 / C-125) (Bacillus halodurans), this protein is Glucose-1-phosphate adenylyltransferase.